A 346-amino-acid polypeptide reads, in one-letter code: MKAARWHNQKDIRIEHIEEPKTEPGKVKIKVKWCGICGSDLHEYLGGPIFIPVDKPHPLTNETAPVTMGHEFSGEVVEVGEGVENYKVGDRVVVEPIFATHGHQGAYNLDEQMGFLGLAGGGGGFSEYVSVDEELLFKLPDELSYEQGALVEPSAVALYAVRSSKLKAGDKAAVFGCGPIGLLVIEALKAAGATDIYAVELSPERQQKAEELGAIIVDPSKTDDVVAEIAERTGGGVDVAFEVTGVPVVLRQAIQSTTIAGETVIVSIWEKGAEIHPNDIVIKERTVKGIIGYRDIFPAVLSLMKEGYFSADKLVTKKIVLDDLIEEGFGALIKEKSQVKILVRPN.

Zn(2+)-binding residues include Cys-37, His-70, and Glu-152.

Belongs to the zinc-containing alcohol dehydrogenase family. In terms of assembly, homotetramer. Interacts with BrxC. Requires Zn(2+) as cofactor.

The protein resides in the cytoplasm. The protein localises to the secreted. It catalyses the reaction (R,R)-butane-2,3-diol + NAD(+) = (R)-acetoin + NADH + H(+). The sequence is that of (R,R)-butanediol dehydrogenase from Bacillus subtilis (strain 168).